Reading from the N-terminus, the 204-residue chain is Cytochrome bo(3) ubiquinol oxidase subunit 3 (204 aa).

At 1–31 (MATDTLTHATAHAHEHGHHDAGGTKIFGFWI) the chain is on the cytoplasmic side. A helical transmembrane segment spans residues 32-50 (YLMSDCILFSILFATYAVL). Residues 51–66 (VNGTAGGPTGKDIFEL) lie on the Periplasmic side of the membrane. The chain crosses the membrane as a helical span at residues 67–85 (PFVLVETFLLLFSSITYGM). Residues 86-101 (AAIAMYKNNKSQVISW) are Cytoplasmic-facing. Residues 102–120 (LALTWLFGAGFIGMEIYEF) traverse the membrane as a helical segment. The Periplasmic portion of the chain corresponds to 121–142 (HHLIVNGMGPDRSGFLSAFFAL). A helical transmembrane segment spans residues 143–161 (VGTHGLHVTSGLIWMAVLM). At 162–184 (VQIARRGLTSTNRTRIMCLSLFW) the chain is on the cytoplasmic side. Residues 185–203 (HFLDVVWICVFTVVYLMGA) traverse the membrane as a helical segment. Residue Met204 is a topological domain, periplasmic.

The protein belongs to the cytochrome c oxidase subunit 3 family. In terms of assembly, heterooctamer of two A chains, two B chains, two C chains and two D chains.

Its subcellular location is the cell inner membrane. Functionally, cytochrome bo(3) ubiquinol terminal oxidase is the component of the aerobic respiratory chain of E.coli that predominates when cells are grown at high aeration. Has proton pump activity across the membrane in addition to electron transfer, pumping 2 protons/electron. The chain is Cytochrome bo(3) ubiquinol oxidase subunit 3 (cyoC) from Escherichia coli O6:H1 (strain CFT073 / ATCC 700928 / UPEC).